We begin with the raw amino-acid sequence, 187 residues long: Protein GrpE (187 aa).

Positions 1-30 (MEKKETKNETEKTNKQDNKNTKSQKKENLN) are disordered.

This sequence belongs to the GrpE family. As to quaternary structure, homodimer.

It localises to the cytoplasm. In terms of biological role, participates actively in the response to hyperosmotic and heat shock by preventing the aggregation of stress-denatured proteins, in association with DnaK and GrpE. It is the nucleotide exchange factor for DnaK and may function as a thermosensor. Unfolded proteins bind initially to DnaJ; upon interaction with the DnaJ-bound protein, DnaK hydrolyzes its bound ATP, resulting in the formation of a stable complex. GrpE releases ADP from DnaK; ATP binding to DnaK triggers the release of the substrate protein, thus completing the reaction cycle. Several rounds of ATP-dependent interactions between DnaJ, DnaK and GrpE are required for fully efficient folding. The protein is Protein GrpE of Borreliella afzelii (strain PKo) (Borrelia afzelii).